Reading from the N-terminus, the 324-residue chain is tRNA pseudouridine synthase B (324 aa).

H43 is a binding site for substrate. D48 acts as the Nucleophile in catalysis. Residues Y76, Y179, and L200 each contribute to the substrate site.

This sequence belongs to the pseudouridine synthase TruB family. Type 1 subfamily.

It catalyses the reaction uridine(55) in tRNA = pseudouridine(55) in tRNA. Responsible for synthesis of pseudouridine from uracil-55 in the psi GC loop of transfer RNAs. The sequence is that of tRNA pseudouridine synthase B from Yersinia pestis bv. Antiqua (strain Nepal516).